Reading from the N-terminus, the 270-residue chain is Phosphoserine phosphatase (270 aa).

Residue D67 is the Nucleophile of the active site. Residues D67 and D69 each coordinate Mg(2+). The active-site Proton donor is the D69. Substrate is bound by residues E76, R112, 156–157, and K205; that span reads SG. D227 is a Mg(2+) binding site.

Belongs to the HAD-like hydrolase superfamily. SerB family. Mg(2+) is required as a cofactor.

The enzyme catalyses O-phospho-L-serine + H2O = L-serine + phosphate. It carries out the reaction O-phospho-D-serine + H2O = D-serine + phosphate. It functions in the pathway amino-acid biosynthesis; L-serine biosynthesis; L-serine from 3-phospho-D-glycerate: step 3/3. Catalyzes the last step in the biosynthesis of serine from carbohydrates. The reaction mechanism proceeds via the formation of a phosphoryl-enzyme intermediates. This Drosophila melanogaster (Fruit fly) protein is Phosphoserine phosphatase (aay).